Consider the following 173-residue polypeptide: Protein SHI RELATED SEQUENCE 8 (173 aa).

Zn(2+) contacts are provided by Cys52, Cys63, Cys68, Cys72, and Cys79. The segment at residues 52 to 79 (CQDFGNQAKKDCSHMRCRTCCKSRGFEC) is a DNA-binding region (zn(2)-C6 fungal-type; degenerate). Positions 100-110 (LATVQPQTQLP) are enriched in low complexity. Residues 100–121 (LATVQPQTQLPRGESVPKRHRE) are disordered.

This sequence belongs to the SHI protein family.

The protein resides in the nucleus. Its function is as follows. Transcription activator that binds DNA on 5'-ACTCTAC-3' and promotes auxin homeostasis-regulating gene expression (e.g. YUC genes), as well as genes affecting stamen development, cell expansion and timing of flowering. Synergistically with other SHI-related proteins, regulates gynoecium, stamen and leaf development in a dose-dependent manner, controlling apical-basal patterning. Promotes style and stigma formation, and influence vascular development during gynoecium development. May also have a role in the formation and/or maintenance of the shoot apical meristem (SAM). The chain is Protein SHI RELATED SEQUENCE 8 (SRS8) from Arabidopsis thaliana (Mouse-ear cress).